The following is a 181-amino-acid chain: Adenine phosphoribosyltransferase (181 aa).

This sequence belongs to the purine/pyrimidine phosphoribosyltransferase family. In terms of assembly, homodimer.

It is found in the cytoplasm. The enzyme catalyses AMP + diphosphate = 5-phospho-alpha-D-ribose 1-diphosphate + adenine. It functions in the pathway purine metabolism; AMP biosynthesis via salvage pathway; AMP from adenine: step 1/1. In terms of biological role, catalyzes a salvage reaction resulting in the formation of AMP, that is energically less costly than de novo synthesis. The chain is Adenine phosphoribosyltransferase from Methylorubrum extorquens (strain CM4 / NCIMB 13688) (Methylobacterium extorquens).